The primary structure comprises 179 residues: Adenylyl-sulfate kinase (179 aa).

13-20 (GLSGAGKS) serves as a coordination point for ATP. The active-site Phosphoserine intermediate is Ser-87.

The protein belongs to the APS kinase family.

The enzyme catalyses adenosine 5'-phosphosulfate + ATP = 3'-phosphoadenylyl sulfate + ADP + H(+). It functions in the pathway sulfur metabolism; hydrogen sulfide biosynthesis; sulfite from sulfate: step 2/3. Catalyzes the synthesis of activated sulfate. This Paraburkholderia xenovorans (strain LB400) protein is Adenylyl-sulfate kinase.